Reading from the N-terminus, the 955-residue chain is Anoctamin-4 (955 aa).

Residues 1 to 352 are Cytoplasmic-facing; sequence MEASSSGITN…FGEKIGLYFA (352 aa). Residues 73–97 are disordered; the sequence is KDDDSLLHPGNLTSTSEDTSRLEAG. A helical membrane pass occupies residues 353–373; it reads WLGWYTGMLFPAAFIGLFVFL. The Extracellular portion of the chain corresponds to 374-424; it reads YGVTTLDHCQVSKEVCQATDIIMCPVCDKYCPFMRLSDSCVYAKVTHLFDN. Residues 425–445 form a helical membrane-spanning segment; sequence GATVFFAVFMAVWATVFLEFW. Over 446–505 the chain is Cytoplasmic; sequence KRRRAVIAYDWDLIDWEEEEEEIRPQFEAKYSKKERMNPISGKPEPYQAFTDKCSRLIVS. Residues 506 to 526 traverse the membrane as a helical segment; sequence ASGIFFMICVVIAAVFGIVIY. Over 527 to 547 the chain is Extracellular; it reads RVVTVSTFAAFKWALIRNNSQ. Asn544 carries an N-linked (GlcNAc...) asparagine glycan. The helical transmembrane segment at 548 to 568 threads the bilayer; it reads VATTGTAVCINFCIIMLLNVL. Over 569-595 the chain is Cytoplasmic; that stretch reads YEKVALLLTNLEQPRTESEWENSFTLK. The chain crosses the membrane as a helical span at residues 596 to 616; that stretch reads MFLFQFVNLNSSTFYIAFFLG. At 617–715 the chain is on the extracellular side; it reads RFTGHPGAYL…AYGLFDEYLE (99 aa). The chain crosses the membrane as a helical span at residues 716–736; that stretch reads MILQFGFTTIFVAAFPLAPLL. At 737–768 the chain is on the cytoplasmic side; sequence ALLNNIIEIRLDAYKFVTQWRRPLASRAKDIG. A helical membrane pass occupies residues 769 to 789; sequence IWYGILEGIGILSVITNAFVI. Topologically, residues 790–885 are extracellular; sequence AITSDFIPRL…QFWHVLAARL (96 aa). N-linked (GlcNAc...) asparagine glycosylation is found at Asn824 and Asn837. Residues 886–906 traverse the membrane as a helical segment; the sequence is AFIIVFEHLVFCIKHLISYLI. At 907–955 the chain is on the cytoplasmic side; it reads PDLPKDLRDRMRREKYLIQEMMYEAELERLQKERKERKKNGKAHHNEWP.

This sequence belongs to the anoctamin family. As to expression, predominantly expressed in neuronal tissues. Expressed at low levels in ovary, uterus, heart and brain.

The protein localises to the cell membrane. The catalysed reaction is a 1,2-diacyl-sn-glycero-3-phospho-L-serine(in) = a 1,2-diacyl-sn-glycero-3-phospho-L-serine(out). The enzyme catalyses a beta-D-galactosyl-(1&lt;-&gt;1')-N-acylsphing-4-enine(out) = a beta-D-galactosyl-(1&lt;-&gt;1')-N-acylsphing-4-enine(in). It catalyses the reaction a 1,2-diacyl-sn-glycero-3-phosphocholine(in) = a 1,2-diacyl-sn-glycero-3-phosphocholine(out). In terms of biological role, has calcium-dependent phospholipid scramblase activity; scrambles phosphatidylserine, phosphatidylcholine and galactosylceramide. Does not exhibit calcium-activated chloride channel (CaCC) activity. The polypeptide is Anoctamin-4 (Mus musculus (Mouse)).